The following is a 75-amino-acid chain: UPF0352 protein VIBHAR_03027 (75 aa).

This sequence belongs to the UPF0352 family.

This chain is UPF0352 protein VIBHAR_03027, found in Vibrio campbellii (strain ATCC BAA-1116).